We begin with the raw amino-acid sequence, 42 residues long: Serine protease inhibitor 8 (42 aa).

It belongs to the protease inhibitor I3 (leguminous Kunitz-type inhibitor) family. Cortex of potato tuber.

Functionally, potent inhibitor of animal pancreatic trypsin (serine protease). The protein is Serine protease inhibitor 8 of Solanum tuberosum (Potato).